A 129-amino-acid polypeptide reads, in one-letter code: Small ribosomal subunit protein uS9 (129 aa).

Over residues 104-113 (TRDSRVVERK) the composition is skewed to basic and acidic residues. The disordered stretch occupies residues 104–129 (TRDSRVVERKKPGKRKARRSRQFSKR). Residues 114-129 (KPGKRKARRSRQFSKR) are compositionally biased toward basic residues.

This sequence belongs to the universal ribosomal protein uS9 family.

The polypeptide is Small ribosomal subunit protein uS9 (Sulfurimonas denitrificans (strain ATCC 33889 / DSM 1251) (Thiomicrospira denitrificans (strain ATCC 33889 / DSM 1251))).